The chain runs to 412 residues: Divalent metal cation transporter MntH (412 aa).

A run of 10 helical transmembrane segments spans residues 19–39 (LSLM…GNFA), 46–66 (AAYG…AMLI), 98–118 (WVQA…GAAI), 122–142 (LLLG…TFLI), 155–175 (MVIG…LVFS), 196–216 (AVLL…IYLH), 241–261 (IAMT…AAAF), 286–306 (AAAV…TVVG), 348–368 (VLVL…VPLL), and 392–412 (LIVV…MSGI).

Belongs to the NRAMP family.

It localises to the cell inner membrane. H(+)-stimulated, divalent metal cation uptake system. The protein is Divalent metal cation transporter MntH of Pectobacterium carotovorum subsp. carotovorum (strain PC1).